Here is a 259-residue protein sequence, read N- to C-terminus: Probable iron export permease protein FetB (259 aa).

Residues 1-5 lie on the Periplasmic side of the membrane; the sequence is MNSHN. The helical transmembrane segment at 6–26 threads the bilayer; the sequence is ITNESLALALMLVVVAILISH. Residues 27-35 are Cytoplasmic-facing; it reads KEKLALEKD. Helical transmembrane passes span 36-56 and 57-77; these read ILWS…VLKY and IFSV…CFNA. The Cytoplasmic portion of the chain corresponds to 78 to 91; it reads AWNAQKRSKYIAKA. A helical membrane pass occupies residues 92–112; that stretch reads FISSFIAITVGAGITLAVLIL. Residues 113–117 lie on the Periplasmic side of the membrane; it reads SGSIE. A helical membrane pass occupies residues 118 to 138; the sequence is FIPMQVIPIAGMIAGNAMVAV. The Cytoplasmic segment spans residues 139 to 191; sequence GLCYNNLGQRVISEQQQIQEKLSLGATPKQASAILIRDSIRAALIPTVDSAKT. Residues 192-212 form a helical membrane-spanning segment; that stretch reads VGLVSLPGMMSGLIFAGIDPV. Residues 213–218 lie on the Periplasmic side of the membrane; sequence KAIKYQ. Residues 219–239 traverse the membrane as a helical segment; it reads IMVTFMLLSTASLSTIIACYL. Residues 240 to 259 lie on the Cytoplasmic side of the membrane; sequence TYRKFYNSRHQLVVTQLKKK.

The protein belongs to the UPF0014 family. In terms of assembly, the complex is composed of two ATP-binding proteins (FetA) and two transmembrane proteins (FetB).

Its subcellular location is the cell inner membrane. In terms of biological role, part of the ABC transporter complex FetAB, which is probably involved in iron export and enhances resistance to H(2)O(2)-mediated oxidative stress. Probably responsible for the translocation of the substrate across the membrane. In Escherichia coli (strain K12), this protein is Probable iron export permease protein FetB (fetB).